Reading from the N-terminus, the 452-residue chain is Bifunctional protein GlmU (452 aa).

The tract at residues 1-232 (MTARNSLTIV…EDEVRGINTK (232 aa)) is pyrophosphorylase. UDP-N-acetyl-alpha-D-glucosamine is bound by residues 11–14 (LAAG), Lys25, Gln78, and 83–84 (GT). Asp108 lines the Mg(2+) pocket. UDP-N-acetyl-alpha-D-glucosamine contacts are provided by Gly144, Glu158, Asn173, and Asn230. Residue Asn230 participates in Mg(2+) binding. The segment at 233–253 (AQLAEAETVMQTRLRLAAMAA) is linker. An N-acetyltransferase region spans residues 254 to 452 (GVTLIAPETV…KSRHRKPKAH (199 aa)). UDP-N-acetyl-alpha-D-glucosamine contacts are provided by Arg319 and Lys337. His349 serves as the catalytic Proton acceptor. Positions 352 and 363 each coordinate UDP-N-acetyl-alpha-D-glucosamine. Residues Ala366, 372-373 (NY), Ser391, Ser409, and Arg426 each bind acetyl-CoA.

In the N-terminal section; belongs to the N-acetylglucosamine-1-phosphate uridyltransferase family. The protein in the C-terminal section; belongs to the transferase hexapeptide repeat family. Homotrimer. Mg(2+) is required as a cofactor.

The protein resides in the cytoplasm. It carries out the reaction alpha-D-glucosamine 1-phosphate + acetyl-CoA = N-acetyl-alpha-D-glucosamine 1-phosphate + CoA + H(+). The enzyme catalyses N-acetyl-alpha-D-glucosamine 1-phosphate + UTP + H(+) = UDP-N-acetyl-alpha-D-glucosamine + diphosphate. The protein operates within nucleotide-sugar biosynthesis; UDP-N-acetyl-alpha-D-glucosamine biosynthesis; N-acetyl-alpha-D-glucosamine 1-phosphate from alpha-D-glucosamine 6-phosphate (route II): step 2/2. It participates in nucleotide-sugar biosynthesis; UDP-N-acetyl-alpha-D-glucosamine biosynthesis; UDP-N-acetyl-alpha-D-glucosamine from N-acetyl-alpha-D-glucosamine 1-phosphate: step 1/1. It functions in the pathway bacterial outer membrane biogenesis; LPS lipid A biosynthesis. Functionally, catalyzes the last two sequential reactions in the de novo biosynthetic pathway for UDP-N-acetylglucosamine (UDP-GlcNAc). The C-terminal domain catalyzes the transfer of acetyl group from acetyl coenzyme A to glucosamine-1-phosphate (GlcN-1-P) to produce N-acetylglucosamine-1-phosphate (GlcNAc-1-P), which is converted into UDP-GlcNAc by the transfer of uridine 5-monophosphate (from uridine 5-triphosphate), a reaction catalyzed by the N-terminal domain. This chain is Bifunctional protein GlmU, found in Rhodopseudomonas palustris (strain ATCC BAA-98 / CGA009).